The chain runs to 253 residues: 5-oxoprolinase subunit A (253 aa).

The protein belongs to the LamB/PxpA family. Forms a complex composed of PxpA, PxpB and PxpC.

It catalyses the reaction 5-oxo-L-proline + ATP + 2 H2O = L-glutamate + ADP + phosphate + H(+). Catalyzes the cleavage of 5-oxoproline to form L-glutamate coupled to the hydrolysis of ATP to ADP and inorganic phosphate. The protein is 5-oxoprolinase subunit A of Bacillus licheniformis (strain ATCC 14580 / DSM 13 / JCM 2505 / CCUG 7422 / NBRC 12200 / NCIMB 9375 / NCTC 10341 / NRRL NRS-1264 / Gibson 46).